We begin with the raw amino-acid sequence, 744 residues long: Protein zyg-11 homolog B (744 aa).

3 LRR repeats span residues 185 to 208 (LPRLESLDISNTSITDITALLACK), 216 to 236 (MHHLKCLKMTTTQILDVVREL), and 237 to 261 (KHLNHLDISDDKQFTSDIALRLLEQ).

The protein belongs to the zyg-11 family. In terms of assembly, (Microbial infection) Interacts with SARS-COV-2 protein ORF10. Interacts with ELOC/Elongin C. Part of an E3 ubiquitin ligase complex including ZYG11B, CUL2 and Elongin BC. In terms of processing, (Microbial infection) Ubiquitinated; leading to proteasomal degradation in the presence of herpes simplex virus 1/HHV-1.

Its subcellular location is the cytoplasm. Functionally, serves as substrate adapter subunit in the E3 ubiquitin ligase complex ZYG11B-CUL2-Elongin BC. Acts to target substrates bearing N-terminal degrons for proteasomal degradation with the first four residues of substrates being the key recognition elements. Prefers Nt-Gly but also has the capacity to recognize Nt-Ser, -Ala and -Cys. Involved in the clearance of proteolytic fragments generated by caspase cleavage during apoptosis since N-terminal glycine degrons are strongly enriched at caspase cleavage sites. Also important in the quality control of protein N-myristoylation in which N-terminal glycine degrons are conditionally exposed after a failure of N-myristoylation. In addition, plays a role in the amplification of cGAS to enhance innate immune response. Mechanistically, strengthens the processes of cGAS binding with dsDNA and assembling oligomers and also accelerates and stabilizes cGAS-DNA condensation, thereby enhancing production of antiviral IFNs and inflammatory cytokines. This is Protein zyg-11 homolog B from Homo sapiens (Human).